The following is a 331-amino-acid chain: Ketol-acid reductoisomerase (NADP(+)) (331 aa).

Residues 2–182 (AQLFYDSDAD…GGTRAGILET (181 aa)) enclose the KARI N-terminal Rossmann domain. NADP(+) contacts are provided by residues 25-28 (YGSQ), Ser-51, Ser-53, and 83-86 (DEFQ). His-108 is an active-site residue. NADP(+) is bound at residue Gly-134. In terms of domain architecture, KARI C-terminal knotted spans 183-328 (NFKEETETDL…KGLRAMFSWL (146 aa)). Residues Asp-191, Glu-195, Glu-227, and Glu-231 each coordinate Mg(2+). Ser-252 contributes to the substrate binding site.

Belongs to the ketol-acid reductoisomerase family. The cofactor is Mg(2+).

It carries out the reaction (2R)-2,3-dihydroxy-3-methylbutanoate + NADP(+) = (2S)-2-acetolactate + NADPH + H(+). It catalyses the reaction (2R,3R)-2,3-dihydroxy-3-methylpentanoate + NADP(+) = (S)-2-ethyl-2-hydroxy-3-oxobutanoate + NADPH + H(+). Its pathway is amino-acid biosynthesis; L-isoleucine biosynthesis; L-isoleucine from 2-oxobutanoate: step 2/4. It functions in the pathway amino-acid biosynthesis; L-valine biosynthesis; L-valine from pyruvate: step 2/4. Functionally, involved in the biosynthesis of branched-chain amino acids (BCAA). Catalyzes an alkyl-migration followed by a ketol-acid reduction of (S)-2-acetolactate (S2AL) to yield (R)-2,3-dihydroxy-isovalerate. In the isomerase reaction, S2AL is rearranged via a Mg-dependent methyl migration to produce 3-hydroxy-3-methyl-2-ketobutyrate (HMKB). In the reductase reaction, this 2-ketoacid undergoes a metal-dependent reduction by NADPH to yield (R)-2,3-dihydroxy-isovalerate. In Prochlorococcus marinus (strain MIT 9211), this protein is Ketol-acid reductoisomerase (NADP(+)).